A 119-amino-acid chain; its full sequence is Large ribosomal subunit protein bL20 (119 aa).

It belongs to the bacterial ribosomal protein bL20 family.

In terms of biological role, binds directly to 23S ribosomal RNA and is necessary for the in vitro assembly process of the 50S ribosomal subunit. It is not involved in the protein synthesizing functions of that subunit. This chain is Large ribosomal subunit protein bL20, found in Chloroflexus aurantiacus (strain ATCC 29366 / DSM 635 / J-10-fl).